Consider the following 470-residue polypeptide: MCENQPKTKADGTAQIEVIPCKICGDKSSGIHYGVITCEGCKGFFRRSQQNNASYSCPRQRNCLIDRTNRNRCQHCRLQKCLALGMSRDAVKFGRMSKKQRDSLYAEVQKHQQRLQEQRQQQSGEAEALARVYSSSISNGLSNLNTETGGTYANGHVIDLPKSEGYYSIDSGQPSPDQSGLDMTGIKQIKQEPIYDLTSVPNLFTYSSFNNGQLAPGITMSEIDRIAQNIIKSHLETCQYTMEELHQLAWQTHTYEEIKAYQSKSREALWQQCAIQITHAIQYVVEFAKRITGFMELCQNDQILLLKSGCLEVVLVRMCRAFNPLNNTVLFEGKYGGMQMFKALGSDDLVNEAFDFAKNLCSLQLTEEEIALFSSAVLISPDRAWLIEPRKVQKLQEKIYFALQHVIQKNHLDDETLAKLIAKIPTITAVCNLHGEKLQVFKQSHPDIVNTLFPPLYKELFNPDCAAVCK.

Residues 18 to 93 (VIPCKICGDK…LGMSRDAVKF (76 aa)) constitute a DNA-binding region (nuclear receptor). NR C4-type zinc fingers lie at residues 21–41 (CKIC…CEGC) and 57–81 (CPRQ…LQKC). Over residues 104–117 (LYAEVQKHQQRLQE) the composition is skewed to basic and acidic residues. Residues 104 to 127 (LYAEVQKHQQRLQEQRQQQSGEAE) are disordered. The NR LBD domain maps to 222-460 (EIDRIAQNII…TLFPPLYKEL (239 aa)). Positions 456 to 461 (LYKELF) match the AF-2 motif.

It belongs to the nuclear hormone receptor family. NR1 subfamily. In terms of assembly, monomer. Interacts with CRX. In terms of tissue distribution, expressed in inner and outer neuroblastic layer as well as in the ganglion cell layer of the developing retina. Expressed in bone marrow osteoprogenitor cells.

The protein resides in the nucleus. Its subcellular location is the nucleoplasm. In terms of biological role, nuclear receptor that binds DNA as a monomer to ROR response elements (RORE) containing a single core motif half-site 5'-AGGTCA-3' preceded by a short A-T-rich sequence. Considered to have intrinsic transcriptional activity, have some natural ligands such as all-trans retinoic acid (ATRA) and other retinoids which act as inverse agonists repressing the transcriptional activity. Required for normal postnatal development of rod and cone photoreceptor cells. Modulates rod photoreceptors differentiation at least by inducing the transcription factor NRL-mediated pathway. In cone photoreceptor cells, regulates transcription of OPN1SW. Involved in the regulation of the period length and stability of the circadian rhythm. May control cytoarchitectural patterning of neocortical neurons during development. May act in a dose-dependent manner to regulate barrel formation upon innervation of layer IV neurons by thalamocortical axons. May play a role in the suppression of osteoblastic differentiation through the inhibition of RUNX2 transcriptional activity. Its function is as follows. Isoform 1 is critical for hindlimb motor control and for the differentiation of amacrine and horizontal cells in the retina. Regulates the expression of PTF1A synergistically with FOXN4. The sequence is that of Nuclear receptor ROR-beta (Rorb) from Mus musculus (Mouse).